The primary structure comprises 808 residues: Receptor like protein 27 (808 aa).

Residues 1–31 (MLFFIKVFMKTILSVLLLFFIFASSFTLVVG) form the signal peptide. The Extracellular portion of the chain corresponds to 32 to 740 (LAGCRPDQIQ…DEDEEVLNWK (709 aa)). Asparagine 56, asparagine 68, asparagine 90, asparagine 103, asparagine 108, asparagine 144, and asparagine 167 each carry an N-linked (GlcNAc...) asparagine glycan. 12 LRR repeats span residues 96 to 120 (LQHL…GFGN), 122 to 144 (NRLE…SFSN), 145 to 170 (LSQL…NLTK), 172 to 192 (SILV…LLTL), 193 to 218 (PFLS…STSS), 220 to 241 (LEFM…ISKL), 242 to 265 (INLK…LFSS), 266 to 291 (FKSL…SKIP), 293 to 314 (NLEN…LKNL), 315 to 338 (TKLE…FWNL), 340 to 363 (RLRR…VLVN), and 364 to 387 (SSVR…PLSI). N-linked (GlcNAc...) asparagine glycosylation is present at asparagine 213. Asparagine 313 is a glycosylation site (N-linked (GlcNAc...) asparagine). Asparagine 363 is a glycosylation site (N-linked (GlcNAc...) asparagine). An LRR 13; degenerate repeat occupies 388–407 (NLLSAWNNSFTGNIPLETCN). Asparagine 394, asparagine 407, and asparagine 420 each carry an N-linked (GlcNAc...) asparagine glycan. 10 LRR repeats span residues 408 to 434 (RSSL…DFQE), 436 to 456 (LIVV…IFSD), 457 to 481 (GALL…LLNC), 483 to 504 (MLRF…WLKA), 505 to 529 (LPDL…DRGP), 532 to 556 (FPKL…YFVN), 601 to 625 (LTSY…IGLL), 626 to 649 (KALI…LANV), 650 to 673 (TELE…LKTL), and 675 to 698 (FLAY…QITG). The N-linked (GlcNAc...) asparagine glycan is linked to asparagine 480. Asparagine 544 is a glycosylation site (N-linked (GlcNAc...) asparagine). 2 N-linked (GlcNAc...) asparagine glycosylation sites follow: asparagine 632 and asparagine 648. The chain crosses the membrane as a helical span at residues 741 to 761 (AVVIGYWPGLLLGLIMAHVIA). The Cytoplasmic segment spans residues 762–808 (SFKPKWLVKIVGPEKRKEDNPVRLFMTLDSRWDSFNNKKNVEQKSDM).

The protein belongs to the RLP family.

The protein resides in the cell membrane. The chain is Receptor like protein 27 from Arabidopsis thaliana (Mouse-ear cress).